A 445-amino-acid polypeptide reads, in one-letter code: Trigger factor (445 aa).

A PPIase FKBP-type domain is found at 162–247 (GDQITMDAVG…VKAVHTAEPT (86 aa)).

It belongs to the FKBP-type PPIase family. Tig subfamily.

The protein resides in the cytoplasm. It catalyses the reaction [protein]-peptidylproline (omega=180) = [protein]-peptidylproline (omega=0). In terms of biological role, involved in protein export. Acts as a chaperone by maintaining the newly synthesized protein in an open conformation. Functions as a peptidyl-prolyl cis-trans isomerase. In Rickettsia bellii (strain OSU 85-389), this protein is Trigger factor.